We begin with the raw amino-acid sequence, 225 residues long: Protein-L-isoaspartate O-methyltransferase (225 aa).

The active site involves Ser-75.

Belongs to the methyltransferase superfamily. L-isoaspartyl/D-aspartyl protein methyltransferase family.

Its subcellular location is the cytoplasm. The catalysed reaction is [protein]-L-isoaspartate + S-adenosyl-L-methionine = [protein]-L-isoaspartate alpha-methyl ester + S-adenosyl-L-homocysteine. Functionally, catalyzes the methyl esterification of L-isoaspartyl residues in peptides and proteins that result from spontaneous decomposition of normal L-aspartyl and L-asparaginyl residues. It plays a role in the repair and/or degradation of damaged proteins. The polypeptide is Protein-L-isoaspartate O-methyltransferase (Xanthomonas campestris pv. campestris (strain 8004)).